Consider the following 339-residue polypeptide: Heat-inducible transcription repressor HrcA (339 aa).

It belongs to the HrcA family.

In terms of biological role, negative regulator of class I heat shock genes (grpE-dnaK-dnaJ and groELS operons). Prevents heat-shock induction of these operons. In Acidothermus cellulolyticus (strain ATCC 43068 / DSM 8971 / 11B), this protein is Heat-inducible transcription repressor HrcA.